The sequence spans 149 residues: Protein E6 (149 aa).

2 zinc fingers span residues 30–66 (CVYC…CMKC) and 103–139 (CITC…CMSC). The short motif at 147–149 (TEV) is the PDZ-binding domain element.

Belongs to the papillomaviridae E6 protein family. Forms homodimers. Interacts with ubiquitin-protein ligase UBE3A/E6-AP and thus forms a complex with human TP53. Interacts with human NFX1 and MAGI3. Interacts with human IRF3; this interaction inhibits the establishment of antiviral state. Interacts with human TYK2; this interaction inhibits JAK-STAT activation by interferon alpha. Interacts with host DLG1; this interaction leads to the proteasomal degradation of DLG1.

The protein localises to the host cytoplasm. Its subcellular location is the host nucleus. Functionally, this protein may be involved in the oncogenic potential of this virus (associated with cancer of the uterine cervix). In terms of biological role, plays a major role in the induction and maintenance of cellular transformation. Acts mainly as an oncoprotein by stimulating the destruction of many host cell key regulatory proteins. E6 associates with host UBE3A/E6-AP ubiquitin-protein ligase, and inactivates tumor suppressors TP53 and TP73 by targeting them to the 26S proteasome for degradation. In turn, DNA damage and chromosomal instabilities increase and lead to cell proliferation and cancer development. The complex E6/E6AP targets several other substrates to degradation via the proteasome including host DLG1 or NFX1, a repressor of human telomerase reverse transcriptase (hTERT). The resulting increased expression of hTERT prevents the shortening of telomere length leading to cell immortalization. Other cellular targets including BAK1, Fas-associated death domain-containing protein (FADD) and procaspase 8, are degraded by E6/E6AP causing inhibition of apoptosis. E6 also inhibits immune response by interacting with host IRF3 and TYK2. These interactions prevent IRF3 transcriptional activities and inhibit TYK2-mediated JAK-STAT activation by interferon alpha resulting in inhibition of the interferon signaling pathway. This Human papillomavirus 35 protein is Protein E6.